The primary structure comprises 843 residues: MPLSYQHFRKLLLLDDEAGPLEEELPRLADEGLNRRVAEDLNLGNLNVSIPWTHKVGNFTGLYSSTVPVFNPEWQTPSFPHIHLQEDIINRCQQYVGPLTVNEKRRLKLIMPARFYPNLTKYLPLDKGIKPYYPEHAVNHYFKTRHYLHTLWKAGILYKRETTRSASFCGSPYSWEQELQHGRLVFQTSTRHGDESFCSQSSGILSRSPVGPCVRSQLKQSRLGLQPQQGSMARGKSGRSGSIRARVHPTTRRSFGVEPSGSGHIDNSASSTSSCLHQSAVRKTAYSHLSTSKRQSSSGHAVEFHNIPPSSARSQSEGPIFSCWWLQFRNSKPCSDYCLTHIVNLLEDWGPCTEHGEHNIRIPRTPARVTGGVFLVDKNPHNTTESRLVVDFSQFSRGSTHVSWPKFAVPNLQSLTNLLSSNLSWLSLDVSAAFYHIPLHPAAMPHLLVGSSGLPRYVARLSSTSRNINHQHGAMQDLHDSCSRNLYVSLLLLYKTFGRKLHLYSHPIILGFRKIPMGVGLSPFLLAQFTSAICSVVRRAFPHCLAFSYMDDVVLGAKSVQHLESLFTSITNFLLSLGIHLNPNKTKRWGYSLNFMGYVIGSWGTLPQEHIVLKLKQCFRKLPVNSPIDWKVCQRIVGLLGFAAPFTQCGYPALMPLYACIQSKQAFTFSPTYKAFLCKQYLNLYPVARQRSGLCQVFADATPTGWGLAIGHRRMRGTFVAPLPIHTAELLAACFARSRSGAKLIGTDNSVVLSRKYTSFPWLLGCAANWILRGTSFVYVPSALNPADDPSRGRLGLYRPLLLLPFRPTTGRTSLYAVSPSVPSHLPDRVHFASPLHVAWRPP.

Residues 1-177 (MPLSYQHFRK…FCGSPYSWEQ (177 aa)) form a terminal protein domain (TP) region. A spacer region spans residues 178-346 (ELQHGRLVFQ…YCLTHIVNLL (169 aa)). Disordered stretches follow at residues 220–273 (QSRL…SSTS) and 289–316 (LSTS…RSQS). Positions 289–299 (LSTSKRQSSSG) are enriched in polar residues. The interval 347–690 (EDWGPCTEHG…YLNLYPVARQ (344 aa)) is polymerase/reverse transcriptase domain (RT). The 244-residue stretch at 357-600 (EHNIRIPRTP…YSLNFMGYVI (244 aa)) folds into the Reverse transcriptase domain. Residues Asp-429, Asp-551, and Asp-552 each contribute to the Mg(2+) site.

It belongs to the hepadnaviridae P protein family.

The catalysed reaction is DNA(n) + a 2'-deoxyribonucleoside 5'-triphosphate = DNA(n+1) + diphosphate. It catalyses the reaction Endonucleolytic cleavage to 5'-phosphomonoester.. With respect to regulation, activated by host HSP70 and HSP40 in vitro to be able to bind the epsilon loop of the pgRNA. Because deletion of the RNase H region renders the protein partly chaperone-independent, the chaperones may be needed indirectly to relieve occlusion of the RNA-binding site by this domain. Inhibited by several reverse-transcriptase inhibitors: Lamivudine, Adefovir and Entecavir. Multifunctional enzyme that converts the viral RNA genome into dsDNA in viral cytoplasmic capsids. This enzyme displays a DNA polymerase activity that can copy either DNA or RNA templates, and a ribonuclease H (RNase H) activity that cleaves the RNA strand of RNA-DNA heteroduplexes in a partially processive 3'- to 5'-endonucleasic mode. Neo-synthesized pregenomic RNA (pgRNA) are encapsidated together with the P protein, and reverse-transcribed inside the nucleocapsid. Initiation of reverse-transcription occurs first by binding the epsilon loop on the pgRNA genome, and is initiated by protein priming, thereby the 5'-end of (-)DNA is covalently linked to P protein. Partial (+)DNA is synthesized from the (-)DNA template and generates the relaxed circular DNA (RC-DNA) genome. After budding and infection, the RC-DNA migrates in the nucleus, and is converted into a plasmid-like covalently closed circular DNA (cccDNA). The activity of P protein does not seem to be necessary for cccDNA generation, and is presumably released from (+)DNA by host nuclear DNA repair machinery. The protein is Protein P of Hepatitis B virus genotype C subtype ad (isolate Japan/S-179/1988) (HBV-C).